The sequence spans 161 residues: Gamma-glutamylaminecyclotransferase A (161 aa).

A substrate-binding site is contributed by tyrosine 26–leucine 29. Glutamate 101 (proton acceptor) is an active-site residue.

Belongs to the gamma-glutamylcyclotransferase family.

It catalyses the reaction epsilon-(gamma-L-glutamyl)-L-lysine = 5-oxo-L-proline + L-lysine. Its function is as follows. May contribute to degradation of proteins cross-linked by transglutaminases by degrading the cross-link between a lysine and a glutamic acid residue. Catalyzes the formation of 5-oxo-L-proline from L-gamma-glutamyl-L-epsilon-lysine. The protein is Gamma-glutamylaminecyclotransferase A (ggact.1) of Danio rerio (Zebrafish).